We begin with the raw amino-acid sequence, 189 residues long: Movement protein (189 aa).

It belongs to the tombusvirus/aureusvirus movement protein p22 family. In terms of assembly, interacts with host protein HFI22. Post-translationally, phosphorylated.

It localises to the host membrane. Transports viral genome to neighboring plant cells directly through plasmosdesmata, without any budding. The movement protein allows efficient cell to cell propagation, by bypassing the host cell wall barrier. This chain is Movement protein, found in Capsicum annuum (Capsicum pepper).